We begin with the raw amino-acid sequence, 347 residues long: DNA-directed RNA polymerase subunit alpha (347 aa).

The interval 1–226 (MLISQRPTLS…ELFGLARELN (226 aa)) is alpha N-terminal domain (alpha-NTD). The tract at residues 241-347 (ADHIASFALP…DQDYAETEQL (107 aa)) is alpha C-terminal domain (alpha-CTD).

This sequence belongs to the RNA polymerase alpha chain family. In terms of assembly, homodimer. The RNAP catalytic core consists of 2 alpha, 1 beta, 1 beta' and 1 omega subunit. When a sigma factor is associated with the core the holoenzyme is formed, which can initiate transcription.

The catalysed reaction is RNA(n) + a ribonucleoside 5'-triphosphate = RNA(n+1) + diphosphate. DNA-dependent RNA polymerase catalyzes the transcription of DNA into RNA using the four ribonucleoside triphosphates as substrates. This chain is DNA-directed RNA polymerase subunit alpha, found in Mycobacterium ulcerans (strain Agy99).